A 150-amino-acid polypeptide reads, in one-letter code: Large ribosomal subunit protein bL9 (150 aa).

Belongs to the bacterial ribosomal protein bL9 family.

In terms of biological role, binds to the 23S rRNA. In Shewanella denitrificans (strain OS217 / ATCC BAA-1090 / DSM 15013), this protein is Large ribosomal subunit protein bL9.